The following is a 94-amino-acid chain: Neutrophil antibiotic peptide NP-1 (94 aa).

The N-terminal stretch at 1–19 (MRTLTLLTALLLLALHTQA) is a signal peptide. Positions 20-62 (KSPQGTAEEAPDQEQLVMEDQDISISFGGDKGTALQDADVKAG) are excised as a propeptide. 3 disulfides stabilise this stretch: Cys65-Cys93, Cys67-Cys82, and Cys72-Cys92. Phosphotyrosine is present on Tyr84.

The protein belongs to the alpha-defensin family. As to expression, highest expression in bone marrow and to a much lesser extent in small intestine.

It is found in the secreted. Its function is as follows. Active in vitro against S.aureus, fungi, Gram-positive and Gram-negative bacteria and to a lesser extent against an enveloped virus. The chain is Neutrophil antibiotic peptide NP-1 from Rattus norvegicus (Rat).